The chain runs to 261 residues: Expansin-B2 (261 aa).

The N-terminal stretch at 1 to 24 (MAGASAKVVAMLLSVLATYGFAAG) is a signal peptide. Residues 51–157 (GGACGFKNTN…RRVPCYHRGL (107 aa)) form the Expansin-like EG45 domain. 3 disulfide bridges follow: cysteine 54–cysteine 82, cysteine 85–cysteine 152, and cysteine 90–cysteine 96. The Expansin-like CBD domain maps to 170 to 256 (VYLAVLVEFA…NWRANTNYGS (87 aa)).

This sequence belongs to the expansin family. Expansin B subfamily. In terms of tissue distribution, expressed in roots.

Its subcellular location is the secreted. It localises to the cell wall. It is found in the membrane. May cause loosening and extension of plant cell walls by disrupting non-covalent bonding between cellulose microfibrils and matrix glucans. No enzymatic activity has been found. May be required for rapid internodal elongation in deepwater rice during submergence. The chain is Expansin-B2 (EXPB2) from Oryza sativa subsp. japonica (Rice).